Reading from the N-terminus, the 120-residue chain is Spermidine export protein MdtJ (120 aa).

4 helical membrane-spanning segments follow: residues 1–21 (MFYW…TLSM), 31–51 (AGYI…SFAV), 54–74 (IALG…ITVF), and 81–101 (EVLS…IVLI).

It belongs to the drug/metabolite transporter (DMT) superfamily. Small multidrug resistance (SMR) (TC 2.A.7.1) family. MdtJ subfamily. Forms a complex with MdtI.

It is found in the cell inner membrane. Its function is as follows. Catalyzes the excretion of spermidine. This Salmonella arizonae (strain ATCC BAA-731 / CDC346-86 / RSK2980) protein is Spermidine export protein MdtJ.